A 400-amino-acid polypeptide reads, in one-letter code: Aspartate/prephenate aminotransferase (400 aa).

L-aspartate contacts are provided by Gly-39, Trp-125, and Asn-175. The residue at position 239 (Lys-239) is an N6-(pyridoxal phosphate)lysine. Arg-375 serves as a coordination point for L-aspartate.

It belongs to the class-I pyridoxal-phosphate-dependent aminotransferase family. In terms of assembly, homodimer. Pyridoxal 5'-phosphate is required as a cofactor.

The protein resides in the cytoplasm. The catalysed reaction is L-aspartate + 2-oxoglutarate = oxaloacetate + L-glutamate. It catalyses the reaction L-arogenate + 2-oxoglutarate = prephenate + L-glutamate. In terms of biological role, catalyzes the reversible conversion of aspartate and 2-oxoglutarate to glutamate and oxaloacetate. Can also transaminate prephenate in the presence of glutamate. The sequence is that of Aspartate/prephenate aminotransferase from Cereibacter sphaeroides (strain ATCC 17029 / ATH 2.4.9) (Rhodobacter sphaeroides).